The chain runs to 475 residues: Ribulose bisphosphate carboxylase large chain (475 aa).

Residues 1-2 constitute a propeptide that is removed on maturation; the sequence is MS. An N-acetylproline modification is found at proline 3. The residue at position 14 (lysine 14) is an N6,N6,N6-trimethyllysine. Asparagine 123 and threonine 173 together coordinate substrate. The active-site Proton acceptor is lysine 175. Lysine 177 contributes to the substrate binding site. Lysine 201, aspartate 203, and glutamate 204 together coordinate Mg(2+). An N6-carboxylysine modification is found at lysine 201. The Proton acceptor role is filled by histidine 294. Residues arginine 295, histidine 327, and serine 379 each contribute to the substrate site.

The protein belongs to the RuBisCO large chain family. Type I subfamily. As to quaternary structure, heterohexadecamer of 8 large chains and 8 small chains; disulfide-linked. The disulfide link is formed within the large subunit homodimers. Requires Mg(2+) as cofactor. In terms of processing, the disulfide bond which can form in the large chain dimeric partners within the hexadecamer appears to be associated with oxidative stress and protein turnover.

The protein resides in the plastid. It is found in the chloroplast. The catalysed reaction is 2 (2R)-3-phosphoglycerate + 2 H(+) = D-ribulose 1,5-bisphosphate + CO2 + H2O. The enzyme catalyses D-ribulose 1,5-bisphosphate + O2 = 2-phosphoglycolate + (2R)-3-phosphoglycerate + 2 H(+). In terms of biological role, ruBisCO catalyzes two reactions: the carboxylation of D-ribulose 1,5-bisphosphate, the primary event in carbon dioxide fixation, as well as the oxidative fragmentation of the pentose substrate in the photorespiration process. Both reactions occur simultaneously and in competition at the same active site. This Cucumis sativus (Cucumber) protein is Ribulose bisphosphate carboxylase large chain (rbcL).